Reading from the N-terminus, the 247-residue chain is Ribonuclease PH (247 aa).

Phosphate is bound by residues Arg-87 and 125-127 (GTR).

It belongs to the RNase PH family. In terms of assembly, homohexameric ring arranged as a trimer of dimers.

The catalysed reaction is tRNA(n+1) + phosphate = tRNA(n) + a ribonucleoside 5'-diphosphate. Its function is as follows. Phosphorolytic 3'-5' exoribonuclease that plays an important role in tRNA 3'-end maturation. Removes nucleotide residues following the 3'-CCA terminus of tRNAs; can also add nucleotides to the ends of RNA molecules by using nucleoside diphosphates as substrates, but this may not be physiologically important. Probably plays a role in initiation of 16S rRNA degradation (leading to ribosome degradation) during starvation. This Nostoc sp. (strain PCC 7120 / SAG 25.82 / UTEX 2576) protein is Ribonuclease PH.